The chain runs to 223 residues: Thiamine-phosphate synthase (223 aa).

Residues 37 to 41 (QFREK) and Asp-72 contribute to the 4-amino-2-methyl-5-(diphosphooxymethyl)pyrimidine site. Mg(2+) is bound by residues Asp-73 and Asp-92. Ser-110 contacts 4-amino-2-methyl-5-(diphosphooxymethyl)pyrimidine. 136-138 (TQS) provides a ligand contact to 2-[(2R,5Z)-2-carboxy-4-methylthiazol-5(2H)-ylidene]ethyl phosphate. Lys-139 serves as a coordination point for 4-amino-2-methyl-5-(diphosphooxymethyl)pyrimidine. 2-[(2R,5Z)-2-carboxy-4-methylthiazol-5(2H)-ylidene]ethyl phosphate-binding positions include Gly-168 and 188–189 (IS).

It belongs to the thiamine-phosphate synthase family. It depends on Mg(2+) as a cofactor.

The catalysed reaction is 2-[(2R,5Z)-2-carboxy-4-methylthiazol-5(2H)-ylidene]ethyl phosphate + 4-amino-2-methyl-5-(diphosphooxymethyl)pyrimidine + 2 H(+) = thiamine phosphate + CO2 + diphosphate. It carries out the reaction 2-(2-carboxy-4-methylthiazol-5-yl)ethyl phosphate + 4-amino-2-methyl-5-(diphosphooxymethyl)pyrimidine + 2 H(+) = thiamine phosphate + CO2 + diphosphate. It catalyses the reaction 4-methyl-5-(2-phosphooxyethyl)-thiazole + 4-amino-2-methyl-5-(diphosphooxymethyl)pyrimidine + H(+) = thiamine phosphate + diphosphate. It functions in the pathway cofactor biosynthesis; thiamine diphosphate biosynthesis; thiamine phosphate from 4-amino-2-methyl-5-diphosphomethylpyrimidine and 4-methyl-5-(2-phosphoethyl)-thiazole: step 1/1. Its function is as follows. Condenses 4-methyl-5-(beta-hydroxyethyl)thiazole monophosphate (THZ-P) and 2-methyl-4-amino-5-hydroxymethyl pyrimidine pyrophosphate (HMP-PP) to form thiamine monophosphate (TMP). This chain is Thiamine-phosphate synthase, found in Streptococcus agalactiae serotype III (strain NEM316).